The primary structure comprises 728 residues: Dynamin-like protein 1 (728 aa).

Residues 1-119 (MKELFQKIWQ…ILQEKVQSID (119 aa)) are assembly domain, required for tetramerization. Positions 159-442 (QNLEFNIAIT…LYAGEKSKIA (284 aa)) constitute a Dynamin-type G domain. The interval 169 to 176 (GVMNAGKS) is G1 motif. 171-177 (MNAGKSS) is a binding site for GDP. The tract at residues 195–196 (ET) is G2 motif. The G3 motif stretch occupies residues 298-301 (DTPG). The tract at residues 358–361 (TKAD) is G4 motif. Residue Lys-359 participates in GDP binding. A region of interest (G5 motif) is located at residue Glu-388. Residue 400-402 (SAK) participates in GDP binding. Residues 470–695 (ENKQGVSEEN…LESLEKVLQS (226 aa)) are required for liposome binding but not for tetramerization.

This sequence belongs to the TRAFAC class dynamin-like GTPase superfamily. Dynamin/Fzo/YdjA family. As to quaternary structure, forms a 2:2 heterotetramer with DLP1. DLP2 forms a central back-to-back dimer flanked on each side by a DLP1 subunit. In the crystal structures the 2 DLP1 subunits are in very different conformations.

The protein resides in the cytoplasm. The protein localises to the cytosol. The enzyme catalyses GTP + H2O = GDP + phosphate + H(+). Functionally, the heterotetrameric DLP1(2)-DLP2(2) complex tethers liposomes and may mediate their fusion. Initial binding is probably mediated by DLP1, while DLP2 couples DLP1 subunits and increases the effective reach of the complex up to 45 nm. The role of the nucleotide is unknown. This subunit alone weakly binds to liposomes; GTP, GDP, GMPPCP and GMPPNP do not change heterotetramer binding. Tetramerization is required for GTPase activity, suggesting the GTPase domains (dynamin-type G) from DLP1 and DLP2 must dimerize to reconstitute the GTPase active site. The sequence is that of Dynamin-like protein 1 from Campylobacter jejuni subsp. jejuni serotype O:23/36 (strain 81-176).